The primary structure comprises 454 residues: Bifunctional protein GlmU (454 aa).

Residues 1–227 (MTQLSVVILA…FMEVEGANNR (227 aa)) form a pyrophosphorylase region. UDP-N-acetyl-alpha-D-glucosamine-binding positions include 9–12 (LAAG), Lys23, Gln74, 79–80 (GT), 101–103 (YGD), Gly138, Glu152, Asn167, and Asn225. Asp103 serves as a coordination point for Mg(2+). Asn225 is a Mg(2+) binding site. Residues 228 to 248 (LQLAALERFYQKTQAEKLLLA) form a linker region. An N-acetyltransferase region spans residues 249 to 454 (GVRLIDPARF…QGWQRPTKKK (206 aa)). UDP-N-acetyl-alpha-D-glucosamine-binding residues include Arg331 and Lys349. His361 functions as the Proton acceptor in the catalytic mechanism. The UDP-N-acetyl-alpha-D-glucosamine site is built by Tyr364 and Asn375. Residues Ala378, 384–385 (NY), Ser403, Ala421, and Arg438 contribute to the acetyl-CoA site.

The protein in the N-terminal section; belongs to the N-acetylglucosamine-1-phosphate uridyltransferase family. This sequence in the C-terminal section; belongs to the transferase hexapeptide repeat family. Homotrimer. The cofactor is Mg(2+).

Its subcellular location is the cytoplasm. The enzyme catalyses alpha-D-glucosamine 1-phosphate + acetyl-CoA = N-acetyl-alpha-D-glucosamine 1-phosphate + CoA + H(+). It catalyses the reaction N-acetyl-alpha-D-glucosamine 1-phosphate + UTP + H(+) = UDP-N-acetyl-alpha-D-glucosamine + diphosphate. The protein operates within nucleotide-sugar biosynthesis; UDP-N-acetyl-alpha-D-glucosamine biosynthesis; N-acetyl-alpha-D-glucosamine 1-phosphate from alpha-D-glucosamine 6-phosphate (route II): step 2/2. Its pathway is nucleotide-sugar biosynthesis; UDP-N-acetyl-alpha-D-glucosamine biosynthesis; UDP-N-acetyl-alpha-D-glucosamine from N-acetyl-alpha-D-glucosamine 1-phosphate: step 1/1. It participates in bacterial outer membrane biogenesis; LPS lipid A biosynthesis. Its function is as follows. Catalyzes the last two sequential reactions in the de novo biosynthetic pathway for UDP-N-acetylglucosamine (UDP-GlcNAc). The C-terminal domain catalyzes the transfer of acetyl group from acetyl coenzyme A to glucosamine-1-phosphate (GlcN-1-P) to produce N-acetylglucosamine-1-phosphate (GlcNAc-1-P), which is converted into UDP-GlcNAc by the transfer of uridine 5-monophosphate (from uridine 5-triphosphate), a reaction catalyzed by the N-terminal domain. The polypeptide is Bifunctional protein GlmU (Actinobacillus pleuropneumoniae serotype 3 (strain JL03)).